The chain runs to 387 residues: 1-deoxy-D-xylulose 5-phosphate reductoisomerase (387 aa).

Residues T11, G12, S13, I14, G37, R38, N39, and N125 each contribute to the NADPH site. K126 serves as a coordination point for 1-deoxy-D-xylulose 5-phosphate. E127 is a binding site for NADPH. Mn(2+) is bound at residue D151. 1-deoxy-D-xylulose 5-phosphate-binding residues include S152, E153, S177, and H200. E153 contributes to the Mn(2+) binding site. G206 is an NADPH binding site. 1-deoxy-D-xylulose 5-phosphate is bound by residues S213, N218, K219, and E222. Mn(2+) is bound at residue E222.

This sequence belongs to the DXR family. Mg(2+) serves as cofactor. The cofactor is Mn(2+).

It carries out the reaction 2-C-methyl-D-erythritol 4-phosphate + NADP(+) = 1-deoxy-D-xylulose 5-phosphate + NADPH + H(+). It participates in isoprenoid biosynthesis; isopentenyl diphosphate biosynthesis via DXP pathway; isopentenyl diphosphate from 1-deoxy-D-xylulose 5-phosphate: step 1/6. Catalyzes the NADPH-dependent rearrangement and reduction of 1-deoxy-D-xylulose-5-phosphate (DXP) to 2-C-methyl-D-erythritol 4-phosphate (MEP). In Desulforamulus reducens (strain ATCC BAA-1160 / DSM 100696 / MI-1) (Desulfotomaculum reducens), this protein is 1-deoxy-D-xylulose 5-phosphate reductoisomerase.